Reading from the N-terminus, the 255-residue chain is 1-(5-phosphoribosyl)-5-[(5-phosphoribosylamino)methylideneamino] imidazole-4-carboxamide isomerase (255 aa).

The active-site Proton acceptor is Asp-8. Residue Asp-129 is the Proton donor of the active site.

Belongs to the HisA/HisF family.

It localises to the cytoplasm. The enzyme catalyses 1-(5-phospho-beta-D-ribosyl)-5-[(5-phospho-beta-D-ribosylamino)methylideneamino]imidazole-4-carboxamide = 5-[(5-phospho-1-deoxy-D-ribulos-1-ylimino)methylamino]-1-(5-phospho-beta-D-ribosyl)imidazole-4-carboxamide. It functions in the pathway amino-acid biosynthesis; L-histidine biosynthesis; L-histidine from 5-phospho-alpha-D-ribose 1-diphosphate: step 4/9. This is 1-(5-phosphoribosyl)-5-[(5-phosphoribosylamino)methylideneamino] imidazole-4-carboxamide isomerase from Prochlorococcus marinus (strain MIT 9312).